The sequence spans 209 residues: Kynurenine formamidase (209 aa).

Trp-20 serves as a coordination point for substrate. His-50, His-54, and Asp-56 together coordinate Zn(2+). His-60 (proton donor/acceptor) is an active-site residue. Residues His-161 and Glu-173 each coordinate Zn(2+).

Belongs to the Cyclase 1 superfamily. KynB family. In terms of assembly, homodimer. Requires Zn(2+) as cofactor.

It carries out the reaction N-formyl-L-kynurenine + H2O = L-kynurenine + formate + H(+). Its pathway is amino-acid degradation; L-tryptophan degradation via kynurenine pathway; L-kynurenine from L-tryptophan: step 2/2. Functionally, catalyzes the hydrolysis of N-formyl-L-kynurenine to L-kynurenine, the second step in the kynurenine pathway of tryptophan degradation. The sequence is that of Kynurenine formamidase from Bacillus anthracis.